Consider the following 1462-residue polypeptide: Serine/threonine-protein kinase HSL1 (1462 aa).

2 disordered regions span residues 1-26 (MSTV…SSSM) and 41-69 (RLSQ…KLGR). Residues 65–330 (WKLGRTLGRG…IDAILTHPLL (266 aa)) enclose the Protein kinase domain. ATP-binding positions include 71-79 (LGRGSTGRV) and K94. D201 acts as the Proton acceptor in catalysis. Disordered stretches follow at residues 412–450 (SNSF…HTTV), 471–540 (SAKG…TSVN), 598–637 (ENSK…TWSL), 992–1031 (EDEE…NYDF), 1095–1230 (KETL…QQTK), and 1269–1321 (NRAA…LQKE). Polar residues-rich tracts occupy residues 428 to 440 (PRST…TVTD) and 471 to 487 (SAKG…PNTP). Residues 510 to 526 (ASRSRNASSRSLKSNSS) show a composition bias toward low complexity. A compositionally biased stretch (polar residues) spans 527-540 (TGRNGNNASVTSVN). The segment covering 610–620 (QLPPPPPPPIE) has biased composition (pro residues). Residues 636 to 715 (SLARRERELA…KLQKHQSAHD (80 aa)) adopt a coiled-coil conformation. A compositionally biased stretch (basic and acidic residues) spans 1095 to 1130 (KETLLKNHSSDEATIEVKEDNNEHDFNDKIKQHYDD). The span at 1131 to 1153 (NGDSEEDDEDEDEEEEDDDDDDD) shows a compositional bias: acidic residues. Polar residues-rich tracts occupy residues 1165–1176 (HNYSLAEITSES), 1197–1218 (STGI…NNGD), and 1292–1302 (NISQPLSSPTK).

It belongs to the protein kinase superfamily. CAMK Ser/Thr protein kinase family. NIM1 subfamily. In terms of processing, phosphorylated throughout the cell cycle, except for the G1 phase.

The protein resides in the bud neck. It carries out the reaction L-seryl-[protein] + ATP = O-phospho-L-seryl-[protein] + ADP + H(+). It catalyses the reaction L-threonyl-[protein] + ATP = O-phospho-L-threonyl-[protein] + ADP + H(+). Protein kinase involved in determination of morphology during the cell cycle of both yeast-form and hyphal cells via regulation of SWE1 and CDC28. Regulates pseudohypha formation, but is not required for septin ring organization or septum formation. Plays an essential role in virulence in a mouse model. This is Serine/threonine-protein kinase HSL1 (HSL1) from Candida albicans (strain SC5314 / ATCC MYA-2876) (Yeast).